The chain runs to 555 residues: Oxygen-dependent choline dehydrogenase (555 aa).

4–33 (DYIIIGAGSAGNVLATRLTEDADVSVLLLE) contributes to the FAD binding site. The tract at residues 180–202 (QQEGFGPMDRTVTPKGRRASTAR) is disordered. Catalysis depends on His473, which acts as the Proton acceptor.

This sequence belongs to the GMC oxidoreductase family. The cofactor is FAD.

The catalysed reaction is choline + A = betaine aldehyde + AH2. It catalyses the reaction betaine aldehyde + NAD(+) + H2O = glycine betaine + NADH + 2 H(+). It functions in the pathway amine and polyamine biosynthesis; betaine biosynthesis via choline pathway; betaine aldehyde from choline (cytochrome c reductase route): step 1/1. Its function is as follows. Involved in the biosynthesis of the osmoprotectant glycine betaine. Catalyzes the oxidation of choline to betaine aldehyde and betaine aldehyde to glycine betaine at the same rate. The chain is Oxygen-dependent choline dehydrogenase from Serratia proteamaculans (strain 568).